We begin with the raw amino-acid sequence, 356 residues long: Tyrosine recombinase XerS (356 aa).

The 106-residue stretch at 16–121 (TMPWYILEYY…ALSSLYKYLT (106 aa)) folds into the Core-binding (CB) domain. The region spanning 169-354 (EFLQYIDTEY…VNDEQKNALD (186 aa)) is the Tyr recombinase domain. Residues arginine 210, lysine 234, histidine 306, arginine 309, and histidine 332 contribute to the active site. Tyrosine 341 acts as the O-(3'-phospho-DNA)-tyrosine intermediate in catalysis.

Belongs to the 'phage' integrase family. XerS subfamily.

It is found in the cytoplasm. Its activity is regulated as follows. FtsK is required for recombination. Site-specific tyrosine recombinase, which acts by catalyzing the cutting and rejoining of the recombining DNA molecules. Essential to convert dimers of the bacterial chromosome into monomers to permit their segregation at cell division. The polypeptide is Tyrosine recombinase XerS (Streptococcus sanguinis (strain SK36)).